Reading from the N-terminus, the 287-residue chain is F420-non-reducing hydrogenase vhu subunit G (287 aa).

The protein belongs to the [NiFe]/[NiFeSe] hydrogenase small subunit family. As to quaternary structure, the F420-non-reducing hydrogenase vhu is composed of four subunits; VhuA, VhuD, VhuG and VhuU.

The chain is F420-non-reducing hydrogenase vhu subunit G (vhuG) from Methanococcus voltae.